A 166-amino-acid chain; its full sequence is Small ribosomal subunit protein uS5 (166 aa).

An S5 DRBM domain is found at 12–75 (YIEKLVQVNR…EAARRNMIQV (64 aa)).

Belongs to the universal ribosomal protein uS5 family. In terms of assembly, part of the 30S ribosomal subunit. Contacts proteins S4 and S8.

Functionally, with S4 and S12 plays an important role in translational accuracy. In terms of biological role, located at the back of the 30S subunit body where it stabilizes the conformation of the head with respect to the body. In Pseudomonas putida (strain ATCC 700007 / DSM 6899 / JCM 31910 / BCRC 17059 / LMG 24140 / F1), this protein is Small ribosomal subunit protein uS5.